The primary structure comprises 231 residues: 7-cyano-7-deazaguanine synthase (231 aa).

Position 8-18 (Phe8–Leu18) interacts with ATP. Zn(2+) contacts are provided by Cys188, Cys197, Cys200, and Cys203.

It belongs to the QueC family. Zn(2+) is required as a cofactor.

It carries out the reaction 7-carboxy-7-deazaguanine + NH4(+) + ATP = 7-cyano-7-deazaguanine + ADP + phosphate + H2O + H(+). The protein operates within purine metabolism; 7-cyano-7-deazaguanine biosynthesis. In terms of biological role, catalyzes the ATP-dependent conversion of 7-carboxy-7-deazaguanine (CDG) to 7-cyano-7-deazaguanine (preQ(0)). This Enterobacter sp. (strain 638) protein is 7-cyano-7-deazaguanine synthase.